The chain runs to 142 residues: Inner membrane protein YqaA (142 aa).

Residues 1–2 (MS) are Cytoplasmic-facing. A helical membrane pass occupies residues 3-23 (EALSLFSLFASSFLSATLLPG). Topologically, residues 24 to 26 (NSE) are periplasmic. A helical transmembrane segment spans residues 27–47 (VVLVAMLLSGISHPWVLVLTA). Topologically, residues 48 to 86 (TMGNSLGGLTNVILGRFFPLRKTSRWQEKATGWLKRYGA) are cytoplasmic. A helical membrane pass occupies residues 87–107 (VTLLLSWMPVVGDLLCLLAGW). At 108–142 (MRISWGPVIFFLCLGKALRYVAVAAATVQGMMWWH) the chain is on the periplasmic side.

This sequence to H.influenzae HI_0489.

It localises to the cell inner membrane. The chain is Inner membrane protein YqaA (yqaA) from Escherichia coli (strain K12).